Consider the following 393-residue polypeptide: Succinate--CoA ligase [ADP-forming] subunit beta (393 aa).

The ATP-grasp domain occupies 9 to 237 (RDLFAKHGVP…KDAANPLEAA (229 aa)). Residues lysine 45, 52–54 (GRG), glutamate 92, proline 95, and glutamate 100 contribute to the ATP site. Mg(2+)-binding residues include asparagine 192 and aspartate 206. Residues asparagine 257 and 319 to 321 (GIT) each bind substrate.

It belongs to the succinate/malate CoA ligase beta subunit family. Heterotetramer of two alpha and two beta subunits. Mg(2+) is required as a cofactor.

The catalysed reaction is succinate + ATP + CoA = succinyl-CoA + ADP + phosphate. It carries out the reaction GTP + succinate + CoA = succinyl-CoA + GDP + phosphate. Its pathway is carbohydrate metabolism; tricarboxylic acid cycle; succinate from succinyl-CoA (ligase route): step 1/1. Succinyl-CoA synthetase functions in the citric acid cycle (TCA), coupling the hydrolysis of succinyl-CoA to the synthesis of either ATP or GTP and thus represents the only step of substrate-level phosphorylation in the TCA. The beta subunit provides nucleotide specificity of the enzyme and binds the substrate succinate, while the binding sites for coenzyme A and phosphate are found in the alpha subunit. The polypeptide is Succinate--CoA ligase [ADP-forming] subunit beta (Streptomyces griseus subsp. griseus (strain JCM 4626 / CBS 651.72 / NBRC 13350 / KCC S-0626 / ISP 5235)).